The primary structure comprises 452 residues: MQTVLAKIVADKAIWVEARKQQQPLASFQNEIQPSTRHFYDALQGARTAFILECKKASPSKGVIRDDFDPARIASIYQHYASAISVLTDEKYFQGSFDFLPVVSQSAPQPILCKDFIIDPYQIYLARYYQADACLLMLSVLDDEQYRQLSAVAHSLKMGVLTEVSNDEERERAIALGAKVVGINNRDLRDLSIDLNRTRQLAPKLGHGVTVISESGINTYGQVRELSHFANGFLIGSALMAHDDLNAAVRRVLLGENKVCGLTRAQDAKAACDAGAIYGGLIFVPSSPRAVSVEQAREVISGAPLQYVGVFKNADIADVCQKAAVLSLSAVQLHGSEDQAYVNALREALPKQVQIWKALSVSDALPARDYHHVDKYIFDNGQGGSGQRFDWSLLQGQPLDNVLLAGGLAADNCVQAAQVGCAGLDFNSGVESQPGIKDARLLASVFQTLRAY.

The tract at residues 1–256 is indole-3-glycerol phosphate synthase; sequence MQTVLAKIVA…AAVRRVLLGE (256 aa). Residues 257–452 form an N-(5'-phosphoribosyl)anthranilate isomerase region; sequence NKVCGLTRAQ…ASVFQTLRAY (196 aa).

This sequence in the N-terminal section; belongs to the TrpC family. It in the C-terminal section; belongs to the TrpF family. In terms of assembly, monomer.

The catalysed reaction is N-(5-phospho-beta-D-ribosyl)anthranilate = 1-(2-carboxyphenylamino)-1-deoxy-D-ribulose 5-phosphate. It carries out the reaction 1-(2-carboxyphenylamino)-1-deoxy-D-ribulose 5-phosphate + H(+) = (1S,2R)-1-C-(indol-3-yl)glycerol 3-phosphate + CO2 + H2O. It participates in amino-acid biosynthesis; L-tryptophan biosynthesis; L-tryptophan from chorismate: step 3/5. It functions in the pathway amino-acid biosynthesis; L-tryptophan biosynthesis; L-tryptophan from chorismate: step 4/5. In terms of biological role, bifunctional enzyme that catalyzes two sequential steps of tryptophan biosynthetic pathway. The first reaction is catalyzed by the isomerase, coded by the TrpF domain; the second reaction is catalyzed by the synthase, coded by the TrpC domain. This chain is Tryptophan biosynthesis protein TrpCF (trpC), found in Salmonella typhimurium (strain LT2 / SGSC1412 / ATCC 700720).